Consider the following 156-residue polypeptide: Small ribosomal subunit protein uS7 (156 aa).

The protein belongs to the universal ribosomal protein uS7 family. As to quaternary structure, part of the 30S ribosomal subunit. Contacts proteins S9 and S11.

One of the primary rRNA binding proteins, it binds directly to 16S rRNA where it nucleates assembly of the head domain of the 30S subunit. Is located at the subunit interface close to the decoding center, probably blocks exit of the E-site tRNA. The sequence is that of Small ribosomal subunit protein uS7 from Salinispora arenicola (strain CNS-205).